We begin with the raw amino-acid sequence, 222 residues long: Holliday junction branch migration complex subunit RuvA (222 aa).

Residues 1–67 form a domain I region; the sequence is MISWLNGLKI…EDGSQLIGFL (67 aa). Positions 68-146 are domain II; that stretch reads NKLERDLFRK…DLIGSSLKKT (79 aa). Residues 147–155 are flexible linker; the sequence is NNHLELEYE. Residues 155 to 222 are domain III; sequence ETNVADEVRS…TLIRINTESG (68 aa).

It belongs to the RuvA family. Homotetramer. Forms an RuvA(8)-RuvB(12)-Holliday junction (HJ) complex. HJ DNA is sandwiched between 2 RuvA tetramers; dsDNA enters through RuvA and exits via RuvB. An RuvB hexamer assembles on each DNA strand where it exits the tetramer. Each RuvB hexamer is contacted by two RuvA subunits (via domain III) on 2 adjacent RuvB subunits; this complex drives branch migration. In the full resolvosome a probable DNA-RuvA(4)-RuvB(12)-RuvC(2) complex forms which resolves the HJ.

The protein localises to the cytoplasm. Its function is as follows. The RuvA-RuvB-RuvC complex processes Holliday junction (HJ) DNA during genetic recombination and DNA repair, while the RuvA-RuvB complex plays an important role in the rescue of blocked DNA replication forks via replication fork reversal (RFR). RuvA specifically binds to HJ cruciform DNA, conferring on it an open structure. The RuvB hexamer acts as an ATP-dependent pump, pulling dsDNA into and through the RuvAB complex. HJ branch migration allows RuvC to scan DNA until it finds its consensus sequence, where it cleaves and resolves the cruciform DNA. This Prochlorococcus marinus (strain SARG / CCMP1375 / SS120) protein is Holliday junction branch migration complex subunit RuvA.